We begin with the raw amino-acid sequence, 79 residues long: uncharacterized protein (79 aa).

This sequence belongs to the UPF0440 family.

This is an uncharacterized protein from Methanocella arvoryzae (strain DSM 22066 / NBRC 105507 / MRE50).